The chain runs to 266 residues: Ribosomal RNA small subunit methyltransferase A (266 aa).

S-adenosyl-L-methionine is bound by residues Asn12, Leu14, Gly39, Glu61, Asp87, and Asn107.

It belongs to the class I-like SAM-binding methyltransferase superfamily. rRNA adenine N(6)-methyltransferase family. RsmA subfamily.

Its subcellular location is the cytoplasm. It catalyses the reaction adenosine(1518)/adenosine(1519) in 16S rRNA + 4 S-adenosyl-L-methionine = N(6)-dimethyladenosine(1518)/N(6)-dimethyladenosine(1519) in 16S rRNA + 4 S-adenosyl-L-homocysteine + 4 H(+). Its function is as follows. Specifically dimethylates two adjacent adenosines (A1518 and A1519) in the loop of a conserved hairpin near the 3'-end of 16S rRNA in the 30S particle. May play a critical role in biogenesis of 30S subunits. This is Ribosomal RNA small subunit methyltransferase A from Nitratidesulfovibrio vulgaris (strain ATCC 29579 / DSM 644 / CCUG 34227 / NCIMB 8303 / VKM B-1760 / Hildenborough) (Desulfovibrio vulgaris).